A 139-amino-acid chain; its full sequence is Large ribosomal subunit protein uL16c (139 aa).

The protein belongs to the universal ribosomal protein uL16 family. Part of the 50S ribosomal subunit.

It localises to the plastid. The protein localises to the chloroplast. This chain is Large ribosomal subunit protein uL16c, found in Cryptomeria japonica (Japanese cedar).